Here is a 135-residue protein sequence, read N- to C-terminus: uncharacterized protein (135 aa).

This is an uncharacterized protein from Methanocaldococcus jannaschii (strain ATCC 43067 / DSM 2661 / JAL-1 / JCM 10045 / NBRC 100440) (Methanococcus jannaschii).